The following is a 510-amino-acid chain: GMP synthase [glutamine-hydrolyzing] (510 aa).

Residues 5–195 (KILVLDFGGQ…LFKVCGVKGT (191 aa)) form the Glutamine amidotransferase type-1 domain. Cys-82 acts as the Nucleophile in catalysis. Residues His-169 and Glu-171 contribute to the active site. In terms of domain architecture, GMPS ATP-PPase spans 196-385 (WNMADFINEE…LGLPDEIVWR (190 aa)). An ATP-binding site is contributed by 223–229 (SGGVDSA).

In terms of assembly, homodimer.

The catalysed reaction is XMP + L-glutamine + ATP + H2O = GMP + L-glutamate + AMP + diphosphate + 2 H(+). It functions in the pathway purine metabolism; GMP biosynthesis; GMP from XMP (L-Gln route): step 1/1. Its function is as follows. Catalyzes the synthesis of GMP from XMP. This is GMP synthase [glutamine-hydrolyzing] from Halothermothrix orenii (strain H 168 / OCM 544 / DSM 9562).